A 133-amino-acid polypeptide reads, in one-letter code: MVDAFAGTWKLVDSKNFDDYMKSIGVGFATRQVANMTKPTTIIEVNGDTIIIKTQSTFKSTEISFKLGVEFDETTADDRKVKSIVTLDGGKLVHLQKWNGQETTLVRELVDGKLILTLTHGSAVCTRTYEKEA.

The residue at position 2 (valine 2) is an N-acetylvaline. Threonine 8 is subject to Phosphothreonine. A Phosphotyrosine; by Tyr-kinases modification is found at tyrosine 20. Residue serine 23 is modified to Phosphoserine. Position 30 is a phosphothreonine (threonine 30). Serine 83 is subject to Phosphoserine. Arginine 127–tyrosine 129 contributes to the (9Z)-octadecenoate binding site. Arginine 127 to tyrosine 129 contributes to the hexadecanoate binding site. Arginine 127 to tyrosine 129 lines the octadecanoate pocket.

It belongs to the calycin superfamily. Fatty-acid binding protein (FABP) family.

Its subcellular location is the cytoplasm. Its function is as follows. FABPs are thought to play a role in the intracellular transport of long-chain fatty acids and their acyl-CoA esters. The chain is Fatty acid-binding protein, heart (FABP3) from Sus scrofa (Pig).